The chain runs to 154 residues: Vimentin (154 aa).

A compositionally biased stretch (low complexity) spans 1 to 13; that stretch reads MSTRSVSSSSYRR. Positions 1-31 are disordered; that stretch reads MSTRSVSSSSYRRMFGGPGTASRPSSTRSYV. Ser2 is subject to N-acetylserine. The segment at 2-95 is head; sequence STRSVSSSSY…FSLADAINTE (94 aa). Phosphoserine is present on Ser5. Phosphoserine; by PKA and PKC; alternate is present on Ser7. An O-linked (GlcNAc) serine; alternate glycan is attached at Ser7. A Phosphoserine modification is found at Ser8. Residues Ser9 and Ser10 each carry the phosphoserine; by PKC modification. Phosphothreonine is present on Thr20. Ser25 is subject to Phosphoserine; by PKA and PKC. A Phosphoserine; by PKC modification is found at Ser26. Thr33 carries O-linked (GlcNAc) threonine glycosylation. O-linked (GlcNAc) serine; alternate glycosylation is present at Ser34. Position 34 is a phosphoserine; by PKC; alternate (Ser34). Ser39 is modified (phosphoserine; by CaMK2, PKA, PKC and ROCK2). Ser42 carries the post-translational modification Phosphoserine; by PKC. Ser49 is subject to Phosphoserine. Residue Tyr53 is modified to Phosphotyrosine. A Phosphoserine modification is found at Ser55. Ser56 carries the post-translational modification Phosphoserine; by CDK5 and CDK1. The residue at position 61 (Tyr61) is a Phosphotyrosine. Ser66 is subject to Phosphoserine; by PKA and PKC. A Phosphoserine; by AURKB and ROCK2 modification is found at Ser72. The residue at position 83 (Ser83) is a Phosphoserine; by CaMK2. Phosphoserine is present on Ser87. Residues 96 to 131 form a coil 1A region; the sequence is FKNTRTNEKVELQELNDRFANYIDKVRFLEQQNKIL. Positions 96-131 form a coiled coil; it reads FKNTRTNEKVELQELNDRFANYIDKVRFLEQQNKIL. The IF rod domain maps to 103-154; the sequence is EKVELQELNDRFANYIDKVRFLEQQNKILLAELEQLKGQGKSRLGHLYEEEM. Lys104 participates in a covalent cross-link: Glycyl lysine isopeptide (Lys-Gly) (interchain with G-Cter in SUMO2). A Phosphotyrosine modification is found at Tyr117. N6-acetyllysine; alternate occurs at positions 120, 129, and 139. N6-succinyllysine; alternate is present on residues Lys120 and Lys129. Residues Lys120, Lys129, and Lys139 each participate in a glycyl lysine isopeptide (Lys-Gly) (interchain with G-Cter in SUMO2); alternate cross-link. A linker 1 region spans residues 132 to 153; it reads LAELEQLKGQGKSRLGHLYEEE. The residue at position 144 (Ser144) is a Phosphoserine. A region of interest (coil 1B) is located at residue Met154.

Belongs to the intermediate filament family. In terms of assembly, homomer assembled from elementary dimers. Identified in complexes that contain VIM, EZR, AHNAK, BFSP1, BFSP2, ANK2, PLEC, PRX and spectrin. Interacts with BCAS3. Interacts with LGSN. Interacts with SYNM. Interacts (via rod region) with PLEC (via CH 1 domain). Interacts with STK33. Interacts with LARP6. Interacts with RAB8B. Interacts with TOR1A; the interaction associates TOR1A with the cytoskeleton. Interacts with TOR1AIP1. Interacts with TOR1AIP1. Interacts with DIAPH1. Interacts with EPPK1; interaction is dependent of higher-order structure of intermediate filament. Interacts with the non-receptor tyrosine kinase SRMS; the interaction leads to phosphorylation of VIM. Interacts with NOD2. Interacts (via head region) with CORO1C. Interacts with HDGF. Interacts with PRKCE (via phorbol-ester/DAG-type 2 domain). Interacts with BFSP2. Interacts with PPL. Interacts with PKP1 and PKP2. Interacts with SCRIB (via PDZ domains); the interaction protects SCRIB from proteasomal degradation and facilitates SCRIB localization to intermediate filaments, the interaction is reduced by cell contact inhibition. One of the most prominent phosphoproteins in various cells of mesenchymal origin. Phosphorylation is enhanced during cell division, at which time vimentin filaments are significantly reorganized. Phosphorylation by PKN1 inhibits the formation of filaments. Filament disassembly during mitosis is promoted by phosphorylation at Ser-55 as well as by nestin. Phosphorylated at Ser-56 by CDK5 during neutrophil secretion in the cytoplasm. Phosphorylated by STK33. Phosphorylated on tyrosine residues by SRMS.

It localises to the cytoplasm. Its subcellular location is the cytoskeleton. The protein localises to the nucleus matrix. The protein resides in the cell membrane. Vimentins are class-III intermediate filaments found in various non-epithelial cells, especially mesenchymal cells. Vimentin is attached to the nucleus, endoplasmic reticulum, and mitochondria, either laterally or terminally. Plays a role in cell directional movement, orientation, cell sheet organization and Golgi complex polarization at the cell migration front. Protects SCRIB from proteasomal degradation and facilitates its localization to intermediate filaments in a cell contact-mediated manner. Its function is as follows. Involved with LARP6 in the stabilization of type I collagen mRNAs for CO1A1 and CO1A2. The sequence is that of Vimentin (VIM) from Ovis aries (Sheep).